Consider the following 357-residue polypeptide: D-alanine--D-alanine ligase (357 aa).

Residues 134–339 (KQLFEHRGLP…YPDLIAKLID (206 aa)) form the ATP-grasp domain. Residue 167–222 (NDKLTYPVFVKPANLGSSVGISKCNNEEELKSGIAEAFQFDRKLVIEQGINAREIE) coordinates ATP. Mg(2+) is bound by residues Asp293, Glu306, and Asn308.

This sequence belongs to the D-alanine--D-alanine ligase family. Requires Mg(2+) as cofactor. It depends on Mn(2+) as a cofactor.

It is found in the cytoplasm. It carries out the reaction 2 D-alanine + ATP = D-alanyl-D-alanine + ADP + phosphate + H(+). It participates in cell wall biogenesis; peptidoglycan biosynthesis. In terms of biological role, cell wall formation. This Staphylococcus epidermidis (strain ATCC 35984 / DSM 28319 / BCRC 17069 / CCUG 31568 / BM 3577 / RP62A) protein is D-alanine--D-alanine ligase.